The sequence spans 549 residues: MALKARALYSFQGENKEEINILENEELHLFSDVSLDGWLQGTNSRGQTGLFPASYVEILRPRSGSVQVDYSGHTQGYTDSPHQGSYDDDEEDDDDWDDWDDGQTVVDEPSGSNGVSRSQLQHHHHYPRPEYTHRPRPALERQDSIASGKRGSVVGRNLNRFSSFVRSGVEAFVLGDVPQFGGVSESHAIEMGPKGPQWKANPRPFSCSVEEPTKQTKFKGIKSYISYRLTPDPCNSPVYRRYKHFDWLYNRLLHKFTVISVPHLPEKQATGRFEEDFIQKRKRRLVLWMDHMTSHPVLSQYDGFQHFLSCQDEKQWKAGKRRAERDELVGASFLLTLQLPTEHQDLQDVEERVDVFKAFSKKMDENVLQLSSVVSELARKHLGGFRKEFQRLGAALQGLSHSFQLDPPYSSEPLVGAISHTGRTYEAVGEMFAEQPKNDQFRFLDTLSLYQGLLSNFPDIIHLQKGAFAKVKESQRMSDEGRMEQDEADGIRKRCRVVGFALQAEINHFHQRRLQDFKQAIQHYLKEQILFYRRVSQELEKTLHMYDDL.

In terms of domain architecture, SH3 spans 1-61; it reads MALKARALYS…PASYVEILRP (61 aa). Residues 66 to 83 are compositionally biased toward polar residues; that stretch reads VQVDYSGHTQGYTDSPHQ. A disordered region spans residues 66-137; it reads VQVDYSGHTQ…RPEYTHRPRP (72 aa). Residues 86-101 are compositionally biased toward acidic residues; that stretch reads YDDDEEDDDDWDDWDD. Polar residues predominate over residues 110-119; sequence SGSNGVSRSQ. Residues 127–137 show a composition bias toward basic and acidic residues; it reads PRPEYTHRPRP. The region spanning 205-315 is the PX domain; it reads FSCSVEEPTK…HFLSCQDEKQ (111 aa). A BAR domain is found at 346–549; the sequence is LQDVEERVDV…EKTLHMYDDL (204 aa).

This sequence belongs to the sorting nexin family.

The protein localises to the cytoplasm. The protein resides in the cytosol. It localises to the membrane. Its subcellular location is the cytoplasmic vesicle membrane. In terms of biological role, plays a role in the reorganization of the cytoskeleton, endocytosis and cellular vesicle trafficking, both during interphase and at the end of mitotic cell divisions. Required for efficient progress through mitosis and cytokinesis. Required for normal formation of the cleavage furrow at the end of mitosis. Modulates endocytosis of cell-surface proteins. Promotes membrane tubulation (in vitro). May promote the formation of macropinosomes. The protein is Sorting nexin-33 (snx33) of Xenopus tropicalis (Western clawed frog).